The following is a 150-amino-acid chain: Arginine repressor (150 aa).

This sequence belongs to the ArgR family.

The protein resides in the cytoplasm. It participates in amino-acid biosynthesis; L-arginine biosynthesis [regulation]. Its function is as follows. Regulates arginine biosynthesis genes. The polypeptide is Arginine repressor (Carboxydothermus hydrogenoformans (strain ATCC BAA-161 / DSM 6008 / Z-2901)).